Consider the following 184-residue polypeptide: Ribosome maturation factor RimM (184 aa).

The PRC barrel domain occupies 101–174; sequence PDEYYDHQLV…RVVIADRPGL (74 aa).

This sequence belongs to the RimM family. In terms of assembly, binds ribosomal protein uS19.

The protein resides in the cytoplasm. An accessory protein needed during the final step in the assembly of 30S ribosomal subunit, possibly for assembly of the head region. Essential for efficient processing of 16S rRNA. May be needed both before and after RbfA during the maturation of 16S rRNA. It has affinity for free ribosomal 30S subunits but not for 70S ribosomes. The chain is Ribosome maturation factor RimM from Nocardioides sp. (strain ATCC BAA-499 / JS614).